We begin with the raw amino-acid sequence, 75 residues long: UPF0154 protein MYPE400 (75 aa).

A helical membrane pass occupies residues 5–27; sequence IGLCLGLGIPISLIIGAVIGYYF.

It belongs to the UPF0154 family.

The protein resides in the membrane. The chain is UPF0154 protein MYPE400 from Malacoplasma penetrans (strain HF-2) (Mycoplasma penetrans).